The primary structure comprises 152 residues: Probable flagellum biosynthesis repressor protein FlbT (152 aa).

This sequence belongs to the FlbT family.

Its function is as follows. Has a post-transcriptional repressor function in flagellum biogenesis. Associates with the 5'-UTR of fljK mRNA and promotes its degradation. The polypeptide is Probable flagellum biosynthesis repressor protein FlbT (Brucella canis (strain ATCC 23365 / NCTC 10854 / RM-666)).